The following is a 424-amino-acid chain: Adenylosuccinate synthetase 1 (424 aa).

GTP contacts are provided by residues 12-18 (GDEGKGK) and 40-42 (GHT). Catalysis depends on aspartate 13, which acts as the Proton acceptor. Residues aspartate 13 and glycine 40 each coordinate Mg(2+). IMP contacts are provided by residues 13–16 (DEGK), 38–41 (NAGH), threonine 127, arginine 141, threonine 236, and arginine 304. The Proton donor role is filled by histidine 41. 300–306 (ARTGRPR) contacts substrate. Residues arginine 306, 332–334 (KLD), and 413–415 (GVG) contribute to the GTP site.

The protein belongs to the adenylosuccinate synthetase family. Homodimer. Mg(2+) is required as a cofactor.

The protein localises to the cytoplasm. It carries out the reaction IMP + L-aspartate + GTP = N(6)-(1,2-dicarboxyethyl)-AMP + GDP + phosphate + 2 H(+). The protein operates within purine metabolism; AMP biosynthesis via de novo pathway; AMP from IMP: step 1/2. Functionally, plays an important role in the de novo pathway of purine nucleotide biosynthesis. Catalyzes the first committed step in the biosynthesis of AMP from IMP. This Methanosarcina acetivorans (strain ATCC 35395 / DSM 2834 / JCM 12185 / C2A) protein is Adenylosuccinate synthetase 1.